We begin with the raw amino-acid sequence, 1414 residues long: DNA-directed RNA polymerase subunit beta' (1414 aa).

The Zn(2+) site is built by Cys-70, Cys-72, Cys-85, and Cys-88. Asp-461, Asp-463, and Asp-465 together coordinate Mg(2+). The Zn(2+) site is built by Cys-820, Cys-894, Cys-901, and Cys-904.

Belongs to the RNA polymerase beta' chain family. As to quaternary structure, the RNAP catalytic core consists of 2 alpha, 1 beta, 1 beta' and 1 omega subunit. When a sigma factor is associated with the core the holoenzyme is formed, which can initiate transcription. The cofactor is Mg(2+). Zn(2+) is required as a cofactor.

The catalysed reaction is RNA(n) + a ribonucleoside 5'-triphosphate = RNA(n+1) + diphosphate. In terms of biological role, DNA-dependent RNA polymerase catalyzes the transcription of DNA into RNA using the four ribonucleoside triphosphates as substrates. This is DNA-directed RNA polymerase subunit beta' from Cupriavidus taiwanensis (strain DSM 17343 / BCRC 17206 / CCUG 44338 / CIP 107171 / LMG 19424 / R1) (Ralstonia taiwanensis (strain LMG 19424)).